A 799-amino-acid chain; its full sequence is Disintegrin and metalloproteinase domain-containing protein B (799 aa).

Residues 1–23 (MKAFSCLLSVIATAASLFQHVDA) form the signal peptide. Topologically, residues 24–707 (RSHARDKLNN…VSDWVSRHKP (684 aa)) are extracellular. 5 N-linked (GlcNAc...) asparagine glycosylation sites follow: Asn33, Asn227, Asn228, Asn314, and Asn408. In terms of domain architecture, Peptidase M12B spans 272-511 (KVALIGVVAD…RTILTSCLTT (240 aa)). 3 disulfide bridges follow: Cys396–Cys496, Cys449–Cys460, and Cys581–Cys601. Residue His432 coordinates Zn(2+). Glu433 is an active-site residue. Residues His436 and His442 each coordinate Zn(2+). Residues 520–609 (GQQCGNGIVE…DCPHDIHSKD (90 aa)) enclose the Disintegrin domain. Residues 708-728 (IVIGVAVGAGCLLLLAIASCI) traverse the membrane as a helical segment. Residues 729–799 (CGRSRRQRPR…PGHLPSTRYA (71 aa)) lie on the Cytoplasmic side of the membrane. Positions 753 to 799 (VYNGWNGAPPNAQQSSPGGHPPYNNIPPPINAPPPAYPGHLPSTRYA) are disordered. A compositionally biased stretch (pro residues) spans 776–789 (NNIPPPINAPPPAY).

It depends on Zn(2+) as a cofactor.

Its subcellular location is the membrane. Probable zinc protease. The sequence is that of Disintegrin and metalloproteinase domain-containing protein B (ADM-B) from Arthroderma benhamiae (strain ATCC MYA-4681 / CBS 112371) (Trichophyton mentagrophytes).